The following is a 527-amino-acid chain: Putative BTB/POZ domain-containing protein R225 (527 aa).

Residues 16–89 form the BTB domain; the sequence is TDLELVLTDP…YGQTNRSTDY (74 aa).

This sequence belongs to the mimivirus BTB/WD family.

This chain is Putative BTB/POZ domain-containing protein R225, found in Acanthamoeba polyphaga (Amoeba).